Here is a 1390-residue protein sequence, read N- to C-terminus: DNA-directed RNA polymerase III subunit RPC1 (1390 aa).

The Zn(2+) site is built by Cys-69, Cys-72, Cys-79, His-82, Cys-109, and Cys-112. Lys-144 is a binding site for DNA. Residues Cys-156 and Cys-159 each contribute to the Zn(2+) site. Residues Lys-167, Ser-326, Lys-348, Arg-353, Arg-360, and Arg-366 each coordinate DNA. An N6-acetyllysine modification is found at Lys-445. RNA is bound at residue Arg-464. Asp-499, Asp-501, and Asp-503 together coordinate Mg(2+). Position 503 (Asp-503) interacts with RNA. The segment at 843–884 (TPTEFFFHTMAGREGLVDTAVKTAETGYMQRRLVKSLEDLCS) is bridging helix. The interval 1029–1070 (PGSAVGALCAQSIGEPGTQMTLKTFHFAGVASMNITLGVPRI) is trigger loop. 3 residues coordinate DNA: Arg-1159, Arg-1305, and Lys-1323.

This sequence belongs to the RNA polymerase beta' chain family. In terms of assembly, component of the RNA polymerase III (Pol III) (Pol III) complex consisting of 17 subunits: a ten-subunit catalytic core composed of POLR3A/RPC1, POLR3B/RPC2, POLR1C/RPAC1, POLR1D/RPAC2, POLR3K/RPC10, POLR2E/RPABC1, POLR2F/RPABC2, POLR2H/RPABC3, POLR2K/RPABC4 and POLR2L/RPABC5; a mobile stalk composed of two subunits POLR3H/RPC8 and CRCP/RPC9, protruding from the core and functioning primarily in transcription initiation; and additional subunits homologous to general transcription factors of the RNA polymerase II machinery, POLR3C/RPC3-POLR3F/RPC6-POLR3G/RPC7 heterotrimer required for transcription initiation and POLR3D/RPC4-POLR3E/RPC5 heterodimer involved in both transcription initiation and termination. Pol III exists as two alternative complexes defined by the mutually exclusive incorporation of subunit POLR3G/RPC7alpha or POLR3GL/RPC7beta. The presence of POLR3G/RPC7alpha or POLR3GL/RPC7beta differentially modulates the transcription potential of Pol III, with POLR3G/RPC7alpha specifically associated with transcription of snaR-A non-coding RNAs. As part of the RNA polymerase III complex, interacts with PKP2. Requires Mg(2+) as cofactor. As to expression, expressed in the brain, in the cortex and the white matter (at protein level).

Its subcellular location is the nucleus. It localises to the cytoplasm. The protein localises to the cytosol. The catalysed reaction is RNA(n) + a ribonucleoside 5'-triphosphate = RNA(n+1) + diphosphate. Catalytic core component of RNA polymerase III (Pol III), a DNA-dependent RNA polymerase which synthesizes small non-coding RNAs using the four ribonucleoside triphosphates as substrates. Synthesizes 5S rRNA, snRNAs, tRNAs and miRNAs from at least 500 distinct genomic loci. Pol III-mediated transcription cycle proceeds through transcription initiation, transcription elongation and transcription termination stages. During transcription initiation, Pol III is recruited to DNA promoters type I, II or III with the help of general transcription factors and other specific initiation factors. Once the polymerase has escaped from the promoter it enters the elongation phase during which RNA is actively polymerized, based on complementarity with the template DNA strand. Transcription termination involves the release of the RNA transcript and polymerase from the DNA. Forms Pol III active center together with the second largest subunit POLR3B/RPC2. Appends one nucleotide at a time to the 3' end of the nascent RNA, with POLR3A/RPC1 contributing a Mg(2+)-coordinating DxDGD motif, and POLR3B/RPC2 participating in the coordination of a second Mg(2+) ion and providing lysine residues believed to facilitate Watson-Crick base pairing between the incoming nucleotide and template base. Typically, Mg(2+) ions direct a 5' nucleoside triphosphate to form a phosphodiester bond with the 3' hydroxyl of the preceding nucleotide of the nascent RNA, with the elimination of pyrophosphate. Pol III plays a key role in sensing and limiting infection by intracellular bacteria and DNA viruses. Acts as a nuclear and cytosolic DNA sensor involved in innate immune response. Can sense non-self dsDNA that serves as template for transcription into dsRNA. The non-self RNA polymerase III transcripts, such as Epstein-Barr virus-encoded RNAs (EBERs) induce type I interferon and NF-kappa-B through the RIG-I pathway. The polypeptide is DNA-directed RNA polymerase III subunit RPC1 (Homo sapiens (Human)).